The following is a 732-amino-acid chain: Catalase-peroxidase (732 aa).

The disordered stretch occupies residues 1-20 (MDKDSKRPVVGSTVRGGMSN). Residues 92-220 (WHSAGTYRMG…LAAVQMGLIY (129 aa)) constitute a cross-link (tryptophyl-tyrosyl-methioninium (Trp-Tyr) (with M-246)). Residue histidine 93 is the Proton acceptor of the active site. The segment at residues 220–246 (YVNPEGPDGNPDPVAAGYDVIETFARM) is a cross-link (tryptophyl-tyrosyl-methioninium (Tyr-Met) (with W-92)). A heme b-binding site is contributed by histidine 261.

The protein belongs to the peroxidase family. Peroxidase/catalase subfamily. As to quaternary structure, homodimer or homotetramer. Heme b is required as a cofactor. Formation of the three residue Trp-Tyr-Met cross-link is important for the catalase, but not the peroxidase activity of the enzyme.

It carries out the reaction H2O2 + AH2 = A + 2 H2O. It catalyses the reaction 2 H2O2 = O2 + 2 H2O. Bifunctional enzyme with both catalase and broad-spectrum peroxidase activity. The sequence is that of Catalase-peroxidase from Desulfosudis oleivorans (strain DSM 6200 / JCM 39069 / Hxd3) (Desulfococcus oleovorans).